The sequence spans 269 residues: Phosphate import ATP-binding protein PstB 1 (269 aa).

Residues 16–255 (FTTQNLDIYY…DRTGKVFGDP (240 aa)) form the ABC transporter domain. ATP is bound at residue 48–55 (GPSGCGKS).

Belongs to the ABC transporter superfamily. Phosphate importer (TC 3.A.1.7) family. In terms of assembly, the complex is composed of two ATP-binding proteins (PstB), two transmembrane proteins (PstC and PstA) and a solute-binding protein (PstS).

The protein resides in the cell inner membrane. It carries out the reaction phosphate(out) + ATP + H2O = ADP + 2 phosphate(in) + H(+). Functionally, part of the ABC transporter complex PstSACB involved in phosphate import. Responsible for energy coupling to the transport system. This Synechocystis sp. (strain ATCC 27184 / PCC 6803 / Kazusa) protein is Phosphate import ATP-binding protein PstB 1.